The primary structure comprises 107 residues: Inner membrane protein YgbE (107 aa).

At 1–20 the chain is on the cytoplasmic side; the sequence is MRNSHNITLTNNDSLTEDEE. A helical transmembrane segment spans residues 21 to 43; sequence TTWSLPGAVVGFISWLFALAMPM. The Periplasmic segment spans residues 44–52; sequence LIYGSNTLF. The chain crosses the membrane as a helical span at residues 53-75; it reads FFIYTWPFFLALMPVAVVVGIAL. Topologically, residues 76 to 86 are cytoplasmic; it reads HSLMDGKLRYS. The chain crosses the membrane as a helical span at residues 87–106; the sequence is IVFTLVTVGIMFGALFMWLL. A topological domain (periplasmic) is located at residue G107.

Its subcellular location is the cell inner membrane. In Escherichia coli (strain K12), this protein is Inner membrane protein YgbE (ygbE).